A 201-amino-acid chain; its full sequence is Adenylyl-sulfate kinase (201 aa).

35–42 lines the ATP pocket; it reads GLSGSGKS. S109 acts as the Phosphoserine intermediate in catalysis.

Belongs to the APS kinase family.

The catalysed reaction is adenosine 5'-phosphosulfate + ATP = 3'-phosphoadenylyl sulfate + ADP + H(+). It participates in sulfur metabolism; hydrogen sulfide biosynthesis; sulfite from sulfate: step 2/3. Functionally, catalyzes the synthesis of activated sulfate. This chain is Adenylyl-sulfate kinase, found in Enterobacter sp. (strain 638).